Here is a 478-residue protein sequence, read N- to C-terminus: Hexokinase (478 aa).

A Hexokinase domain is found at 21 to 465 (EYLLKELTEL…LGAGAAIIAA (445 aa)). Positions 75-208 (TGKEMGDYLA…KVPIEVVALI (134 aa)) are hexokinase small subdomain. Position 111 (Lys-111) interacts with ATP. The tract at residues 151 to 177 (PLGFTFSYPASQGSINEGYLQRWTKGF) is glucose-binding. The segment at 209–454 (NDTTGTLVAS…DPIVIVPAED (246 aa)) is hexokinase large subdomain.

The protein belongs to the hexokinase family. Monomer.

The catalysed reaction is a D-hexose + ATP = a D-hexose 6-phosphate + ADP + H(+). It carries out the reaction D-fructose + ATP = D-fructose 6-phosphate + ADP + H(+). It catalyses the reaction D-glucose + ATP = D-glucose 6-phosphate + ADP + H(+). It functions in the pathway carbohydrate metabolism; hexose metabolism. The protein operates within carbohydrate degradation; glycolysis; D-glyceraldehyde 3-phosphate and glycerone phosphate from D-glucose: step 1/4. Catalyzes the phosphorylation of hexose, such as D-glucose and D-fructose, to hexose 6-phosphate (D-glucose 6-phosphate and D-fructose 6-phosphate, respectively). Mediates the initial step of glycolysis by catalyzing phosphorylation of D-glucose to D-glucose 6-phosphate. This is Hexokinase (HXK) from Schwanniomyces occidentalis (Yeast).